Here is a 185-residue protein sequence, read N- to C-terminus: Ribosome-recycling factor (185 aa).

It belongs to the RRF family.

The protein localises to the cytoplasm. Responsible for the release of ribosomes from messenger RNA at the termination of protein biosynthesis. May increase the efficiency of translation by recycling ribosomes from one round of translation to another. This is Ribosome-recycling factor from Bacillus cereus (strain ATCC 10987 / NRS 248).